The sequence spans 333 residues: Phosphoribosylformylglycinamidine cyclo-ligase (333 aa).

This sequence belongs to the AIR synthase family.

The protein localises to the cytoplasm. The catalysed reaction is 2-formamido-N(1)-(5-O-phospho-beta-D-ribosyl)acetamidine + ATP = 5-amino-1-(5-phospho-beta-D-ribosyl)imidazole + ADP + phosphate + H(+). Its pathway is purine metabolism; IMP biosynthesis via de novo pathway; 5-amino-1-(5-phospho-D-ribosyl)imidazole from N(2)-formyl-N(1)-(5-phospho-D-ribosyl)glycinamide: step 2/2. This Methanosarcina barkeri (strain Fusaro / DSM 804) protein is Phosphoribosylformylglycinamidine cyclo-ligase.